We begin with the raw amino-acid sequence, 459 residues long: MSSGRIVQIIGAVIDVEFPRDSVPSIYNALEVQSAAGTTLEVQQQLGDGVVRTIAMGSTEGLKRGLEVTDSGAAISVPVGKATLGRIMDVLGNPIDEAGPIATEERWGIHRPAPSFAEQAGGNDLLETGIKVIDLVCPFTKGGKVGLFGGAGVGKTVNMMELIRNIAIEHSGYSVFAGVGERTREGNDFYHEMKDSNVLDKVALVYGQMNEPPGNRLRVALTGLTMAEKFRDEGNDVLLFVDNIYRYTLAGTEVSALLGRMPSAVGYQPTLAEEMGTLQERITSTKNGSITSIQAVYVPADDLTDPSPATTFAHLDATVVLSRDIASLGIYPAVDPLDSTSRQLDPNVIGQEHYDTARGVQYVLQRYKELKDIIAILGMDELSETDKQLVNRARKIQRFLSQPFFVAEVFTGASGKYVSLKDTIAGFKGILNGDYDHLPEQAFYMVGGIEEAIEKAKKL.

ATP is bound at residue 149-156 (GGAGVGKT).

This sequence belongs to the ATPase alpha/beta chains family. In terms of assembly, F-type ATPases have 2 components, CF(1) - the catalytic core - and CF(0) - the membrane proton channel. CF(1) has five subunits: alpha(3), beta(3), gamma(1), delta(1), epsilon(1). CF(0) has three main subunits: a(1), b(2) and c(9-12). The alpha and beta chains form an alternating ring which encloses part of the gamma chain. CF(1) is attached to CF(0) by a central stalk formed by the gamma and epsilon chains, while a peripheral stalk is formed by the delta and b chains.

The protein localises to the cell inner membrane. The enzyme catalyses ATP + H2O + 4 H(+)(in) = ADP + phosphate + 5 H(+)(out). Produces ATP from ADP in the presence of a proton gradient across the membrane. The catalytic sites are hosted primarily by the beta subunits. The protein is ATP synthase subunit beta of Pseudomonas savastanoi pv. phaseolicola (strain 1448A / Race 6) (Pseudomonas syringae pv. phaseolicola (strain 1448A / Race 6)).